Reading from the N-terminus, the 421-residue chain is UDP-N-acetylglucosamine 1-carboxyvinyltransferase (421 aa).

Position 22–23 (22–23 (KN)) interacts with phosphoenolpyruvate. Arg-93 serves as a coordination point for UDP-N-acetyl-alpha-D-glucosamine. The active-site Proton donor is the Cys-117. A 2-(S-cysteinyl)pyruvic acid O-phosphothioketal modification is found at Cys-117. Residues 122–126 (RPVDL), Asp-308, and Leu-330 each bind UDP-N-acetyl-alpha-D-glucosamine.

It belongs to the EPSP synthase family. MurA subfamily.

Its subcellular location is the cytoplasm. The enzyme catalyses phosphoenolpyruvate + UDP-N-acetyl-alpha-D-glucosamine = UDP-N-acetyl-3-O-(1-carboxyvinyl)-alpha-D-glucosamine + phosphate. Its pathway is cell wall biogenesis; peptidoglycan biosynthesis. Cell wall formation. Adds enolpyruvyl to UDP-N-acetylglucosamine. The polypeptide is UDP-N-acetylglucosamine 1-carboxyvinyltransferase (Helicobacter hepaticus (strain ATCC 51449 / 3B1)).